A 417-amino-acid polypeptide reads, in one-letter code: Queuine tRNA-ribosyltransferase accessory subunit 2 (417 aa).

Zn(2+) contacts are provided by Cys-324, Cys-326, Cys-329, and His-355.

The protein belongs to the queuine tRNA-ribosyltransferase family. QTRT2 subfamily. As to quaternary structure, heterodimer of a catalytic subunit and an accessory subunit. It depends on Zn(2+) as a cofactor.

The protein resides in the cytoplasm. Its function is as follows. Non-catalytic subunit of the queuine tRNA-ribosyltransferase (TGT) that catalyzes the base-exchange of a guanine (G) residue with queuine (Q) at position 34 (anticodon wobble position) in tRNAs with GU(N) anticodons (tRNA-Asp, -Asn, -His and -Tyr), resulting in the hypermodified nucleoside queuosine (7-(((4,5-cis-dihydroxy-2-cyclopenten-1-yl)amino)methyl)-7-deazaguanosine). This chain is Queuine tRNA-ribosyltransferase accessory subunit 2, found in Drosophila virilis (Fruit fly).